The following is a 402-amino-acid chain: MMKRLHPLRIQVHLKSDYPLFTFEQLLSTNGIRRGQTARISLKDYIEWQNFPNIMKRENFFTQRKPVTTTAKEEPFSFDNILDCEPQFSKCLAKWLLVNYKLNDYPYYDLNIVNIYTDLPQAIQICKNLMSYLKSTLSDNMFQKIKYFMVPLYKCDKIPSKLLDGIPGSVSLVQDYPVSPYFLQKKFHIEDPIQILMLNDVIKYTTHDLVRYSSDDKGWQQCFVDINKNGQKSKSFDSAIDYSCELALEQMFNDRSHVSPGKELYIPTKLIEILMTIKNNIPEHRLFIVDTPQRSSPTIISLLKSLISPRPTGSSQIVQPYSDSIFSDKRSGRICFMTDFLQLQNIYNGINSSSSSCEVEDVADFVEKWISPSERSTLSSQNGNRPQLEDIKNSSLAVLHST.

Belongs to the NDUFAF7 family.

Its subcellular location is the mitochondrion. It catalyses the reaction L-arginyl-[protein] + 2 S-adenosyl-L-methionine = N(omega),N(omega)'-dimethyl-L-arginyl-[protein] + 2 S-adenosyl-L-homocysteine + 2 H(+). In terms of biological role, arginine methyltransferase involved in the assembly or stability of mitochondrial NADH:ubiquinone oxidoreductase complex (complex I). This is Protein arginine methyltransferase NDUFAF7 homolog, mitochondrial from Saccharomyces cerevisiae (strain ATCC 204508 / S288c) (Baker's yeast).